The primary structure comprises 220 residues: Thiamine-phosphate synthase (220 aa).

Residues 39-43 (QLRDK) and Asn-80 each bind 4-amino-2-methyl-5-(diphosphooxymethyl)pyrimidine. Mg(2+) is bound by residues Asp-81 and Asp-100. Position 119 (Ser-119) interacts with 4-amino-2-methyl-5-(diphosphooxymethyl)pyrimidine. Residue 145–147 (TPT) participates in 2-[(2R,5Z)-2-carboxy-4-methylthiazol-5(2H)-ylidene]ethyl phosphate binding. Residue Lys-148 participates in 4-amino-2-methyl-5-(diphosphooxymethyl)pyrimidine binding. Gly-176 lines the 2-[(2R,5Z)-2-carboxy-4-methylthiazol-5(2H)-ylidene]ethyl phosphate pocket.

It belongs to the thiamine-phosphate synthase family. The cofactor is Mg(2+).

The catalysed reaction is 2-[(2R,5Z)-2-carboxy-4-methylthiazol-5(2H)-ylidene]ethyl phosphate + 4-amino-2-methyl-5-(diphosphooxymethyl)pyrimidine + 2 H(+) = thiamine phosphate + CO2 + diphosphate. It carries out the reaction 2-(2-carboxy-4-methylthiazol-5-yl)ethyl phosphate + 4-amino-2-methyl-5-(diphosphooxymethyl)pyrimidine + 2 H(+) = thiamine phosphate + CO2 + diphosphate. The enzyme catalyses 4-methyl-5-(2-phosphooxyethyl)-thiazole + 4-amino-2-methyl-5-(diphosphooxymethyl)pyrimidine + H(+) = thiamine phosphate + diphosphate. It participates in cofactor biosynthesis; thiamine diphosphate biosynthesis; thiamine phosphate from 4-amino-2-methyl-5-diphosphomethylpyrimidine and 4-methyl-5-(2-phosphoethyl)-thiazole: step 1/1. Functionally, condenses 4-methyl-5-(beta-hydroxyethyl)thiazole monophosphate (THZ-P) and 2-methyl-4-amino-5-hydroxymethyl pyrimidine pyrophosphate (HMP-PP) to form thiamine monophosphate (TMP). This Mycobacterium ulcerans (strain Agy99) protein is Thiamine-phosphate synthase.